Consider the following 336-residue polypeptide: Inositol 2-dehydrogenase (336 aa).

Belongs to the Gfo/Idh/MocA family. Homotetramer.

The enzyme catalyses myo-inositol + NAD(+) = scyllo-inosose + NADH + H(+). In terms of biological role, involved in the oxidation of myo-inositol (MI) to 2-keto-myo-inositol (2KMI or 2-inosose). This is Inositol 2-dehydrogenase from Pseudomonas savastanoi pv. phaseolicola (strain 1448A / Race 6) (Pseudomonas syringae pv. phaseolicola (strain 1448A / Race 6)).